The chain runs to 212 residues: Adenylate kinase (212 aa).

An ATP-binding site is contributed by 10–15; sequence GAGKGT. Residues 30-59 are NMP; sequence STGDMFRAAMANQTEMGVLAKSYIDKGELV. AMP is bound by residues T31, R36, 57 to 59, 86 to 89, and Q93; these read ELV and GYPR. The interval 127 to 159 is LID; sequence GRIIHRVTGETFHKVFNPPVDYKEEDYYQREDD. Residues R128 and 137 to 138 contribute to the ATP site; that span reads TF. Residues R156 and R167 each coordinate AMP. Q195 contributes to the ATP binding site.

The protein belongs to the adenylate kinase family. As to quaternary structure, monomer.

It localises to the cytoplasm. The enzyme catalyses AMP + ATP = 2 ADP. The protein operates within purine metabolism; AMP biosynthesis via salvage pathway; AMP from ADP: step 1/1. Catalyzes the reversible transfer of the terminal phosphate group between ATP and AMP. Plays an important role in cellular energy homeostasis and in adenine nucleotide metabolism. This chain is Adenylate kinase, found in Streptococcus pneumoniae serotype 4 (strain ATCC BAA-334 / TIGR4).